Consider the following 279-residue polypeptide: Tryptophan synthase alpha chain (279 aa).

Catalysis depends on proton acceptor residues Glu49 and Asp60.

Belongs to the TrpA family. As to quaternary structure, tetramer of two alpha and two beta chains.

The catalysed reaction is (1S,2R)-1-C-(indol-3-yl)glycerol 3-phosphate + L-serine = D-glyceraldehyde 3-phosphate + L-tryptophan + H2O. It functions in the pathway amino-acid biosynthesis; L-tryptophan biosynthesis; L-tryptophan from chorismate: step 5/5. The alpha subunit is responsible for the aldol cleavage of indoleglycerol phosphate to indole and glyceraldehyde 3-phosphate. The sequence is that of Tryptophan synthase alpha chain from Nitrosospira multiformis (strain ATCC 25196 / NCIMB 11849 / C 71).